Reading from the N-terminus, the 162-residue chain is Caveolin-2 (162 aa).

The Cytoplasmic portion of the chain corresponds to 1 to 86; that stretch reads MGLETEKADV…FEISKYVMYK (86 aa). Phosphotyrosine; by SRC is present on tyrosine 19. Phosphoserine occurs at positions 20 and 23. Phosphotyrosine; by SRC is present on tyrosine 27. Residue serine 36 is modified to Phosphoserine. The helical intramembrane region spans 87 to 107; sequence FLTVFLAIPLAFLAGILFATL. The Cytoplasmic segment spans residues 108 to 162; sequence SCLHIWIIMPFVKTCLMVLPSVQTIWKSVTDAIIAPLCTSIGRSFSSVSLQLSQD.

Belongs to the caveolin family. As to quaternary structure, monomer or homodimer. Interacts with CAV1; the interaction forms a stable heterooligomeric complex that is required for targeting to lipid rafts and for caveolae formation. Tyrosine phosphorylated forms do not form heterooligomers with the Tyr-19-phosphorylated form existing as a monomer or dimer, and the Tyr-27-form as a monomer only. Interacts (tyrosine phosphorylated form) with the SH2 domain-containing proteins, RASA1, NCK1 and SRC. Interacts (tyrosine phosphorylated form) with INSR, the interaction (Tyr-27-phosphorylated form) is increased on insulin stimulation. Interacts (Tyr-19 phosphorylated form) with MAPK1 (phosphorylated form); the interaction, promoted by insulin, leads to nuclear location and MAPK1 activation. Interacts with STAT3; the interaction is increased on insulin-induced tyrosine phosphorylation leading to STAT activation. In terms of processing, phosphorylated on serine and tyrosine residues. CAV1 promotes phosphorylation on Ser-23 which then targets the complex to the plasma membrane, lipid rafts and caveolae. Phosphorylation on Ser-36 appears to modulate mitosis in endothelial cells. Phosphorylation on both Tyr-19 and Tyr-27 is required for insulin-induced 'Ser-727' phosphorylation of STAT3 and its activation. Phosphorylation on Tyr-19 is required for insulin-induced phosphorylation of MAPK1 and DNA binding of STAT3. Tyrosine phosphorylation is induced by both EGF and insulin (By. similarity).

It localises to the nucleus. It is found in the cytoplasm. The protein resides in the golgi apparatus membrane. The protein localises to the cell membrane. Its subcellular location is the membrane. It localises to the caveola. Functionally, may act as a scaffolding protein within caveolar membranes. Interacts directly with G-protein alpha subunits and can functionally regulate their activity. Acts as an accessory protein in conjunction with CAV1 in targeting to lipid rafts and driving caveolae formation. The Ser-36 phosphorylated form has a role in modulating mitosis in endothelial cells. Positive regulator of cellular mitogenesis of the MAPK signaling pathway. Required for the insulin-stimulated nuclear translocation and activation of MAPK1 and STAT3, and the subsequent regulation of cell cycle progression. This Plecturocebus moloch (Dusky titi monkey) protein is Caveolin-2 (CAV2).